A 307-amino-acid chain; its full sequence is Acyl transferase (307 aa).

Residues Ser-116, Asp-213, and His-243 each act as charge relay system in the active site.

This sequence belongs to the LuxD family.

It functions in the pathway lipid metabolism; fatty acid reduction for biolumincescence. Acyl transferase is part of the fatty acid reductase system required for aldehyde biosynthesis; it produces fatty acids for the luminescent reaction. This chain is Acyl transferase, found in Photorhabdus laumondii subsp. laumondii (strain DSM 15139 / CIP 105565 / TT01) (Photorhabdus luminescens subsp. laumondii).